Here is a 429-residue protein sequence, read N- to C-terminus: Citrate synthase (429 aa).

Residues histidine 306 and aspartate 364 contribute to the active site.

It belongs to the citrate synthase family.

The enzyme catalyses oxaloacetate + acetyl-CoA + H2O = citrate + CoA + H(+). The protein operates within carbohydrate metabolism; tricarboxylic acid cycle; isocitrate from oxaloacetate: step 1/2. The chain is Citrate synthase (gltA) from Rhizobium meliloti (strain 1021) (Ensifer meliloti).